We begin with the raw amino-acid sequence, 352 residues long: Blue-sensitive opsin (352 aa).

At 1-42 (MRGNRLVEFPDDFWIPIPLDTNNVTALSPFLVPQDHLGSPTI) the chain is on the extracellular side. An N-linked (GlcNAc...) asparagine glycan is attached at Asn-23. A helical transmembrane segment spans residues 43–67 (FYSMSALMFVLFVAGTAINLLTIAC). Topologically, residues 68-79 (TLQYKKLRSHLN) are cytoplasmic. A helical transmembrane segment spans residues 80-105 (YILVNMAVANLIVASTGSSTCFVCFA). At 106–119 (FKYMVLGPLGCKIE) the chain is on the extracellular side. Cys-116 and Cys-193 are joined by a disulfide. The chain crosses the membrane as a helical span at residues 120–139 (GFTAALGGMVSLWSLAVIAF). The Cytoplasmic segment spans residues 140 to 158 (ERWLVICKPLGNFVFKSEH). The chain crosses the membrane as a helical span at residues 159-182 (ALLCCALTWVCGLCASVPPLVGWS). Residues 183-208 (RYIPEGMQCSCGPDWYTTGNKFNNES) lie on the Extracellular side of the membrane. The N-linked (GlcNAc...) asparagine glycan is linked to Asn-206. A helical transmembrane segment spans residues 209-236 (FVMFLFCFCFAVPFSIIVFCYSQLLFTL). Topologically, residues 237–258 (KMAAKAQADSASTQKAEKEVTR) are cytoplasmic. The helical transmembrane segment at 259 to 282 (MVVVMVVAFLVCYVPYASFALWVI) threads the bilayer. Residues 283–290 (NNRGQTFD) are Extracellular-facing. Residues 291–315 (LRLATIPSCVSKASTVYNPVIYVLL) traverse the membrane as a helical segment. Position 302 is an N6-(retinylidene)lysine (Lys-302). Residues 316–352 (NKQFRLCMKKMLGMSADEDEESSTSQSTTEVSKVGPS) lie on the Cytoplasmic side of the membrane. The interval 332-352 (DEDEESSTSQSTTEVSKVGPS) is disordered.

It belongs to the G-protein coupled receptor 1 family. Opsin subfamily. In terms of processing, phosphorylated on some or all of the serine and threonine residues present in the C-terminal region. As to expression, the color pigments are found in the cone photoreceptor cells.

The protein resides in the membrane. Visual pigments are the light-absorbing molecules that mediate vision. They consist of an apoprotein, opsin, covalently linked to cis-retinal. This is Blue-sensitive opsin from Oryzias latipes (Japanese rice fish).